The sequence spans 732 residues: Ets DNA-binding protein pokkuri (732 aa).

Residues 33-117 (SSQLAELKTQ…NVLQMLIIES (85 aa)) enclose the PNT domain. The interval 133 to 295 (SRYPLSPHSH…PPGTPILKDI (163 aa)) is disordered. Positions 141-157 (SHPPTPTWPPLNAPPEN) are enriched in pro residues. Over residues 176–193 (NSVTLSPPPSVDSQASSP) the composition is skewed to polar residues. Residues 205 to 240 (GAAPGSAGGSAPAAGGATNTSNPTSSSASSTGSNGS) show a composition bias toward low complexity. The segment at residues 396-479 (RLLWDFLQQL…QGERHCYQFL (84 aa)) is a DNA-binding region (ETS). 3 disordered regions span residues 496 to 548 (QSTP…NGPM), 590 to 647 (GPPP…TATS), and 674 to 732 (VAAS…HMQQ). The segment covering 506–539 (SPSMPQGSSQAPGSPAGQNWNPQQQSQQQQQSPQ) has biased composition (low complexity). Residue Ser-543 is modified to Phosphoserine. Residues 637–647 (LSVSSKSTATS) are compositionally biased toward polar residues. Residues Ser-677, Ser-682, and Ser-696 each carry the phosphoserine modification. Over residues 690–709 (AGASNASSSPRPMDQASEQA) the composition is skewed to polar residues.

It belongs to the ETS family. In terms of processing, phosphorylated in response to MAPK signaling. May be phosphorylated by rl. In terms of tissue distribution, expressed in R7 and cone cells of the eye.

It localises to the nucleus. Ets-related protein that functions as a negative regulator of photoreceptor development acting antagonistically to pnt and the proneural signal mediated by RAS. It acts upstream of SINA to inhibit R7 development. The sequence is that of Ets DNA-binding protein pokkuri (aop) from Drosophila melanogaster (Fruit fly).